The following is a 780-amino-acid chain: Chloride channel protein CLC-b (780 aa).

A disordered region spans residues 1 to 28 (MVEEDLNQIGGNSNYNGEGGDPESNTLN). A run of 12 helical transmembrane segments spans residues 87-107 (TLACLVGLFTGLIATLINLAV), 130-150 (GLMVLVGANLGLTLVASVLCV), 177-197 (FGATTMIVKIVGSIGAVAAGL), 205-225 (LVHIGSCIASLLGQGGTDNHR), 247-267 (GSAAGVCAAFRSPVGGVLFAL), 277-297 (ALLWRTFFSTAVVVVVLREFI), 327-347 (VTDIIPVMLIGVIGGILGSLY), 370-390 (VLLSLTVSLFTSVCLYGLPFL), 452-472 (MGSLWIFFVLYCILGLFTFGI), 477-497 (GLFLPIILMGAAYGRMLGAAM), 509-529 (AVLGAAALMAGSMRMTVSLCV), and 530-550 (IFLELTNNLLLLPITMIVLLI). 2 consecutive CBS domains span residues 594 to 663 (AKPP…FLTE) and 708 to 770 (TNTT…AFPL). The chain crosses the membrane as a helical span at residues 735-755 (HLLIVPKIQASGMCPVVGILT).

It belongs to the chloride channel (TC 2.A.49) family. In terms of assembly, homodimer. Interacts with PP2A5. In terms of tissue distribution, broadly expressed in the plant.

The protein localises to the membrane. Its function is as follows. Voltage-gated chloride channel. The polypeptide is Chloride channel protein CLC-b (CLC-B) (Arabidopsis thaliana (Mouse-ear cress)).